The primary structure comprises 245 residues: tRNA pseudouridine synthase A 2 (245 aa).

D53 functions as the Nucleophile in the catalytic mechanism. Y111 is a binding site for substrate.

Belongs to the tRNA pseudouridine synthase TruA family. In terms of assembly, homodimer.

The catalysed reaction is uridine(38/39/40) in tRNA = pseudouridine(38/39/40) in tRNA. Functionally, formation of pseudouridine at positions 38, 39 and 40 in the anticodon stem and loop of transfer RNAs. This Bacillus cereus (strain ZK / E33L) protein is tRNA pseudouridine synthase A 2.